Reading from the N-terminus, the 318-residue chain is Methionyl-tRNA formyltransferase (318 aa).

112-115 is a binding site for (6S)-5,6,7,8-tetrahydrofolate; the sequence is SILP.

It belongs to the Fmt family.

It catalyses the reaction L-methionyl-tRNA(fMet) + (6R)-10-formyltetrahydrofolate = N-formyl-L-methionyl-tRNA(fMet) + (6S)-5,6,7,8-tetrahydrofolate + H(+). Its function is as follows. Attaches a formyl group to the free amino group of methionyl-tRNA(fMet). The formyl group appears to play a dual role in the initiator identity of N-formylmethionyl-tRNA by promoting its recognition by IF2 and preventing the misappropriation of this tRNA by the elongation apparatus. In Shewanella oneidensis (strain ATCC 700550 / JCM 31522 / CIP 106686 / LMG 19005 / NCIMB 14063 / MR-1), this protein is Methionyl-tRNA formyltransferase.